The primary structure comprises 209 residues: Putative 3-methyladenine DNA glycosylase (209 aa).

The disordered stretch occupies residues 189-209; the sequence is YISKTQPGPPPKKRKKGLESS. Positions 199–209 are enriched in basic residues; that stretch reads PKKRKKGLESS.

This sequence belongs to the DNA glycosylase MPG family.

The chain is Putative 3-methyladenine DNA glycosylase from Chlorobaculum tepidum (strain ATCC 49652 / DSM 12025 / NBRC 103806 / TLS) (Chlorobium tepidum).